Consider the following 399-residue polypeptide: Acetate kinase (399 aa).

Position 10 (Asn-10) interacts with Mg(2+). Lys-17 is a binding site for ATP. Arg-91 lines the substrate pocket. The active-site Proton donor/acceptor is Asp-148. Residues 208–212, 283–285, and 331–335 each bind ATP; these read HLGNG, DCR, and GIGEN. Glu-385 lines the Mg(2+) pocket.

Belongs to the acetokinase family. As to quaternary structure, homodimer. Requires Mg(2+) as cofactor. It depends on Mn(2+) as a cofactor.

The protein resides in the cytoplasm. It carries out the reaction acetate + ATP = acetyl phosphate + ADP. It participates in metabolic intermediate biosynthesis; acetyl-CoA biosynthesis; acetyl-CoA from acetate: step 1/2. Catalyzes the formation of acetyl phosphate from acetate and ATP. Can also catalyze the reverse reaction. The chain is Acetate kinase from Shewanella sp. (strain ANA-3).